Here is a 2202-residue protein sequence, read N- to C-terminus: Nonribosomal peptide synthetase 5 (2202 aa).

The segment at 58–443 is adenylation 1; the sequence is TYAQLDALSD…LLSYDKVDSA (386 aa). The Carrier 1 domain occupies 517–593; it reads ERGLGAVESV…NIAAAVVELS (77 aa). An O-(pantetheine 4'-phosphoryl)serine modification is found at serine 554. Residues 625–918 form a condensation 1 region; the sequence is IAPMTDMQTR…INTLPLAINT (294 aa). The segment at 1105–1482 is adenylation 2; sequence TYREFGRMTE…EVQSTISKLA (378 aa). The region spanning 1563-1643 is the Carrier 2 domain; that stretch reads DLETDTQRVL…DLSLAIDELV (81 aa). Residue serine 1602 is modified to O-(pantetheine 4'-phosphoryl)serine. Residues 1664 to 1952 form a condensation 2 region; that stretch reads GQLPLSYLEK…FLDRLLLRIQ (289 aa). The disordered stretch occupies residues 2103–2129; that stretch reads PVGLTPSHEGSAELTNGTNKTDSTTGQ. The segment covering 2115–2129 has biased composition (polar residues); that stretch reads ELTNGTNKTDSTTGQ. Residues 2130 to 2202 enclose the Carrier 3 domain; that stretch reads QELENNLTDV…LELATCAVII (73 aa). The residue at position 2164 (serine 2164) is an O-(pantetheine 4'-phosphoryl)serine.

This sequence belongs to the NRP synthetase family.

In terms of biological role, nonribosomal peptide synthesis (NRPS) is a key mechanism responsible for the biosynthesis of bioactive metabolites which are potentially contributing to organismal virulence. In Aspergillus fumigatus (strain ATCC MYA-4609 / CBS 101355 / FGSC A1100 / Af293) (Neosartorya fumigata), this protein is Nonribosomal peptide synthetase 5 (NRPS5).